We begin with the raw amino-acid sequence, 353 residues long: ATP-dependent kinase YFH7 (353 aa).

31-39 (GSPGSGKST) contributes to the ATP binding site.

This sequence belongs to the YFH7 family.

In terms of biological role, ATP-dependent kinase that could be involved in endoplasmic reticulum membrane assembly. The chain is ATP-dependent kinase YFH7 (YFH7) from Saccharomyces cerevisiae (strain Lalvin EC1118 / Prise de mousse) (Baker's yeast).